Here is a 221-residue protein sequence, read N- to C-terminus: N-(5'-phosphoribosyl)anthranilate isomerase (221 aa).

Belongs to the TrpF family.

The enzyme catalyses N-(5-phospho-beta-D-ribosyl)anthranilate = 1-(2-carboxyphenylamino)-1-deoxy-D-ribulose 5-phosphate. It functions in the pathway amino-acid biosynthesis; L-tryptophan biosynthesis; L-tryptophan from chorismate: step 3/5. In Geobacillus thermodenitrificans (strain NG80-2), this protein is N-(5'-phosphoribosyl)anthranilate isomerase.